The following is a 158-amino-acid chain: 6,7-dimethyl-8-ribityllumazine synthase (158 aa).

5-amino-6-(D-ribitylamino)uracil contacts are provided by residues phenylalanine 22, alanine 56–glutamate 58, and valine 80–isoleucine 82. Residue glutamate 85–threonine 86 participates in (2S)-2-hydroxy-3-oxobutyl phosphate binding. The active-site Proton donor is the histidine 88. Asparagine 113 contributes to the 5-amino-6-(D-ribitylamino)uracil binding site. Arginine 127 is a (2S)-2-hydroxy-3-oxobutyl phosphate binding site.

This sequence belongs to the DMRL synthase family.

The catalysed reaction is (2S)-2-hydroxy-3-oxobutyl phosphate + 5-amino-6-(D-ribitylamino)uracil = 6,7-dimethyl-8-(1-D-ribityl)lumazine + phosphate + 2 H2O + H(+). Its pathway is cofactor biosynthesis; riboflavin biosynthesis; riboflavin from 2-hydroxy-3-oxobutyl phosphate and 5-amino-6-(D-ribitylamino)uracil: step 1/2. Its function is as follows. Catalyzes the formation of 6,7-dimethyl-8-ribityllumazine by condensation of 5-amino-6-(D-ribitylamino)uracil with 3,4-dihydroxy-2-butanone 4-phosphate. This is the penultimate step in the biosynthesis of riboflavin. The sequence is that of 6,7-dimethyl-8-ribityllumazine synthase from Neisseria meningitidis serogroup C (strain 053442).